The sequence spans 734 residues: Oligopeptide transporter 2 (734 aa).

14 helical membrane-spanning segments follow: residues 44-64 (MWFL…FFGY), 68-88 (PLMI…KLMA), 125-145 (GAGF…IMAF), 152-172 (FLAS…WAGI), 211-231 (FFVI…YLFL), 252-272 (LGSG…SVIA), 283-303 (FFAI…VIPI), 359-379 (FFAI…THVA), 414-434 (WWFY…CIFM), 442-462 (WWGL…VSII), 525-545 (MFLV…SVAW), 596-616 (YPAL…VWLL), 644-664 (ATSV…YFVF), and 677-697 (VLSA…YFSL).

The protein belongs to the oligopeptide OPT transporter (TC 2.A.67.1) family. As to expression, expressed in flowers, leaves, roots, and stems.

The protein localises to the membrane. Functionally, involved in the translocation of tetra- and pentapeptides across the cellular membrane in an energy-dependent manner. The sequence is that of Oligopeptide transporter 2 (OPT2) from Arabidopsis thaliana (Mouse-ear cress).